Reading from the N-terminus, the 392-residue chain is GTPase Obg (392 aa).

Residues 1–159 enclose the Obg domain; it reads MKFVDEATIL…RDLQLELMLL (159 aa). The segment at 127–148 is disordered; sequence NSRFKSSVNRSPRQKTMGTPGD. The span at 129–143 shows a compositional bias: polar residues; sequence RFKSSVNRSPRQKTM. Residues 160-333 form the OBG-type G domain; the sequence is ADVGMLGMPN…LCWDVMAFII (174 aa). Residues 166–173, 191–195, 213–216, 283–286, and 314–316 contribute to the GTP site; these read GMPNAGKS, FTTLV, DIPG, NKID, and SAA. Residues Ser173 and Thr193 each contribute to the Mg(2+) site. The span at 363-386 shows a compositional bias: acidic residues; sequence EQEVEVEDDEEWDEDWDEDDEEGV. Residues 363–392 form a disordered region; sequence EQEVEVEDDEEWDEDWDEDDEEGVEFIYKR.

This sequence belongs to the TRAFAC class OBG-HflX-like GTPase superfamily. OBG GTPase family. Monomer. It depends on Mg(2+) as a cofactor.

The protein resides in the cytoplasm. An essential GTPase which binds GTP, GDP and possibly (p)ppGpp with moderate affinity, with high nucleotide exchange rates and a fairly low GTP hydrolysis rate. Plays a role in control of the cell cycle, stress response, ribosome biogenesis and in those bacteria that undergo differentiation, in morphogenesis control. This chain is GTPase Obg, found in Enterobacter sp. (strain 638).